Consider the following 253-residue polypeptide: UPF0758 protein Bxeno_A3578 (253 aa).

One can recognise an MPN domain in the interval 131–253 (LINSPEAVEN…VYSFARAGWP (123 aa)). 3 residues coordinate Zn(2+): H202, H204, and D215. The JAMM motif motif lies at 202–215 (HNHPSGAVQPSASD).

The protein belongs to the UPF0758 family.

In Paraburkholderia xenovorans (strain LB400), this protein is UPF0758 protein Bxeno_A3578.